The sequence spans 31 residues: Dermaseptin-DI3 (31 aa).

This sequence belongs to the frog skin active peptide (FSAP) family. Dermaseptin subfamily. In terms of tissue distribution, expressed by the skin glands.

It is found in the secreted. Functionally, antibacterial activity against Gram-positive bacteria S.aureus and E.faecalis, and Gram-negative bacteria P.aeruginosa and E.coli. This is Dermaseptin-DI3 from Phyllomedusa distincta (Monkey frog).